We begin with the raw amino-acid sequence, 344 residues long: Protein L-Myc-1-B (344 aa).

Polar residues-rich tracts occupy residues 104–113 (GSPRVTNTQK) and 213–223 (NTMSPQHNFHS). 2 disordered regions span residues 104–162 (GSPR…EDEI) and 208–271 (LPPE…YLER). The span at 259 to 270 (DLAKRKNHNYLE) shows a compositional bias: basic and acidic residues. Residues 261–313 (AKRKNHNYLERKRRNDLRSRFLALREEVPSLSRSTKTPKVVVLSKATEFLKGL) enclose the bHLH domain. A leucine-zipper region spans residues 313–341 (LVIQEQQLTAEKLKLWSRHQQLLRRISQL).

As to quaternary structure, efficient DNA binding requires dimerization with another bHLH protein. Binds DNA as a heterodimer with MAX. As to expression, high levels in oocytes, modest levels in kidney and low levels in spleen.

Its subcellular location is the nucleus. The chain is Protein L-Myc-1-B (mycl1-b) from Xenopus laevis (African clawed frog).